A 202-amino-acid polypeptide reads, in one-letter code: Small ribosomal subunit protein uS4c (202 aa).

The S4 RNA-binding domain maps to 90 to 158 (MRLDNIIFRL…MKRSRDSYEK (69 aa)).

It belongs to the universal ribosomal protein uS4 family. Part of the 30S ribosomal subunit. Contacts protein S5. The interaction surface between S4 and S5 is involved in control of translational fidelity.

Its subcellular location is the plastid. It is found in the chloroplast. In terms of biological role, one of the primary rRNA binding proteins, it binds directly to 16S rRNA where it nucleates assembly of the body of the 30S subunit. With S5 and S12 plays an important role in translational accuracy. This is Small ribosomal subunit protein uS4c (rps4) from Anthoceros angustus (Hornwort).